We begin with the raw amino-acid sequence, 115 residues long: Large ribosomal subunit protein bL19 (115 aa).

This sequence belongs to the bacterial ribosomal protein bL19 family.

In terms of biological role, this protein is located at the 30S-50S ribosomal subunit interface and may play a role in the structure and function of the aminoacyl-tRNA binding site. This chain is Large ribosomal subunit protein bL19, found in Enterobacter sp. (strain 638).